The chain runs to 609 residues: UvrABC system protein C (609 aa).

The 79-residue stretch at 16 to 94 (SSPGVYRMYD…IKQYMPRYNV (79 aa)) folds into the GIY-YIG domain. Positions 203-238 (LQVMTELVSKMEASALALEYEQAASYRDQIAALRRV) constitute a UVR domain.

Belongs to the UvrC family. As to quaternary structure, interacts with UvrB in an incision complex.

It is found in the cytoplasm. The UvrABC repair system catalyzes the recognition and processing of DNA lesions. UvrC both incises the 5' and 3' sides of the lesion. The N-terminal half is responsible for the 3' incision and the C-terminal half is responsible for the 5' incision. In Shewanella sediminis (strain HAW-EB3), this protein is UvrABC system protein C.